Reading from the N-terminus, the 117-residue chain is Ig heavy chain V region 3 (117 aa).

A signal peptide spans Met-1 to Ser-19. The interval Gln-20–Thr-49 is framework-1. An intrachain disulfide couples Cys-41 to Cys-115. The segment at Ser-50–Asp-54 is complementarity-determining-1. A framework-2 region spans residues Trp-55–Gly-68. Residues Asn-69–Asp-85 form a complementarity-determining-2 region. Residues Lys-86–Arg-117 form a framework-3 region.

This Mus musculus (Mouse) protein is Ig heavy chain V region 3 (Ighv1-61).